Here is a 316-residue protein sequence, read N- to C-terminus: BTB/POZ domain-containing adapter for CUL3-mediated RhoA degradation protein 2 (316 aa).

Residues Lys28–Gln96 enclose the BTB domain. A compositionally biased stretch (polar residues) spans Glu268–Pro279. The tract at residues Glu268–Glu287 is disordered. Ser278 carries the phosphoserine modification. Ser280 bears the Phosphoserine; by CK2 mark.

Belongs to the BACURD family. In terms of assembly, component of the BCR(TNFAIP1) E3 ubiquitin ligase complex, at least composed of CUL3, TNFAIP1/BACURD2 and RBX1. Interacts with RHOA; with a preference for RhoA-GDP. Interacts with RHOB. Interacts with PCNA. Interacts with CSNK2B. In terms of processing, phosphorylation at Ser-280 by CK2 facilitates the nucleus localization and increases interaction with PCNA.

The protein resides in the cytoplasm. It localises to the nucleus. Its subcellular location is the endosome. Its pathway is protein modification; protein ubiquitination. Substrate-specific adapter of a BCR (BTB-CUL3-RBX1) E3 ubiquitin-protein ligase complex involved in regulation of cytoskeleton structure. The BCR(TNFAIP1) E3 ubiquitin ligase complex mediates the ubiquitination of RHOA, leading to its degradation by the proteasome, thereby regulating the actin cytoskeleton and cell migration. Its interaction with RHOB may regulate apoptosis. May enhance the PCNA-dependent DNA polymerase delta activity. This Homo sapiens (Human) protein is BTB/POZ domain-containing adapter for CUL3-mediated RhoA degradation protein 2 (TNFAIP1).